The following is an 883-amino-acid chain: Translation initiation factor IF-2 (883 aa).

The tract at residues 1-259 (MVDTKTPGDK…GASKQRGRLT (259 aa)) is disordered. Low complexity-rich tracts occupy residues 10 to 22 (KTLT…LTLK) and 77 to 89 (PRQQ…PQQS). A compositionally biased stretch (basic and acidic residues) spans 113-184 (ARVREIEERK…GDAEPAKKPA (72 aa)). A compositionally biased stretch (low complexity) spans 185-218 (ETSTTTTTAAPARPATTTTRTPTPAGRPPAVAAE). Pro residues predominate over residues 235-244 (PARPAPPPKQ). The 170-residue stretch at 379–548 (PRSPVVTVMG…MIALQAEILE (170 aa)) folds into the tr-type G domain. A G1 region spans residues 388 to 395 (GHVDHGKT). 388–395 (GHVDHGKT) is a binding site for GTP. Residues 413–417 (GITQH) form a G2 region. The tract at residues 436 to 439 (DTPG) is G3. Residues 436-440 (DTPGH) and 490-493 (NKID) contribute to the GTP site. The tract at residues 490 to 493 (NKID) is G4. The interval 526-528 (SAK) is G5.

This sequence belongs to the TRAFAC class translation factor GTPase superfamily. Classic translation factor GTPase family. IF-2 subfamily.

It localises to the cytoplasm. One of the essential components for the initiation of protein synthesis. Protects formylmethionyl-tRNA from spontaneous hydrolysis and promotes its binding to the 30S ribosomal subunits. Also involved in the hydrolysis of GTP during the formation of the 70S ribosomal complex. This is Translation initiation factor IF-2 from Rhodopseudomonas palustris (strain ATCC BAA-98 / CGA009).